The sequence spans 279 residues: Energy-coupling factor transporter ATP-binding protein EcfA (279 aa).

The ABC transporter domain occupies 4–239 (VETKDLYFRY…VETIRKANLR (236 aa)). 37–44 (GPNGAGKS) is a binding site for ATP.

It belongs to the ABC transporter superfamily. Energy-coupling factor EcfA family. In terms of assembly, forms a stable energy-coupling factor (ECF) transporter complex composed of 2 membrane-embedded substrate-binding proteins (S component), 2 ATP-binding proteins (A component) and 2 transmembrane proteins (T component).

Its subcellular location is the cell membrane. ATP-binding (A) component of a common energy-coupling factor (ECF) ABC-transporter complex. Unlike classic ABC transporters this ECF transporter provides the energy necessary to transport a number of different substrates. The polypeptide is Energy-coupling factor transporter ATP-binding protein EcfA (Methanocaldococcus jannaschii (strain ATCC 43067 / DSM 2661 / JAL-1 / JCM 10045 / NBRC 100440) (Methanococcus jannaschii)).